A 255-amino-acid polypeptide reads, in one-letter code: 5'-nucleotidase SurE (255 aa).

D8, D9, S39, and N91 together coordinate a divalent metal cation.

This sequence belongs to the SurE nucleotidase family. The cofactor is a divalent metal cation.

It is found in the cytoplasm. The catalysed reaction is a ribonucleoside 5'-phosphate + H2O = a ribonucleoside + phosphate. Functionally, nucleotidase that shows phosphatase activity on nucleoside 5'-monophosphates. This chain is 5'-nucleotidase SurE, found in Nitrosospira multiformis (strain ATCC 25196 / NCIMB 11849 / C 71).